We begin with the raw amino-acid sequence, 1348 residues long: Putative late blight resistance protein homolog R1B-12 (1348 aa).

2 coiled-coil regions span residues 446 to 469 (RYSD…ESLQ) and 561 to 583 (PRMN…KLLN). One can recognise an NB-ARC domain in the interval 552–848 (RTSSQLTRTP…ISESFIKSCE (297 aa)). ATP is bound at residue 595 to 602 (GMPGLGKT). LRR repeat units follow at residues 977 to 1001 (FKFL…LLYL), 1051 to 1074 (LRHL…SAKL), 1123 to 1147 (PITL…ISAQ), 1151 to 1170 (YLKL…TADH), 1171 to 1194 (LKHL…EVSN), 1197 to 1219 (FPQL…ADDA), 1220 to 1244 (FPNL…FMDI), and 1309 to 1332 (LPGI…DMDA). The 65-residue stretch at 1284–1348 (VKKMVLKFDT…VGKLINRGML (65 aa)) folds into the HMA domain.

The protein belongs to the disease resistance NB-LRR family.

It localises to the cytoplasm. The protein resides in the membrane. Functionally, confers resistance to late blight (Phytophthora infestans) races carrying the avirulence gene Avr1. Resistance proteins guard the plant against pathogens that contain an appropriate avirulence protein via an indirect interaction with this avirulence protein. That triggers a defense system including the hypersensitive response, which restricts the pathogen growth. The chain is Putative late blight resistance protein homolog R1B-12 (R1B-12) from Solanum demissum (Wild potato).